The primary structure comprises 140 residues: Small ribosomal subunit protein eS17x (140 aa).

It belongs to the eukaryotic ribosomal protein eS17 family.

This is Small ribosomal subunit protein eS17x (RPS17C) from Arabidopsis thaliana (Mouse-ear cress).